Reading from the N-terminus, the 487-residue chain is Serine/threonine-protein kinase 4 (487 aa).

Met1 is modified (N-acetylmethionine). A Phosphothreonine modification is found at Thr3. One can recognise a Protein kinase domain in the interval 30-281; that stretch reads FDVLEKLGEG…ATQLLQHPFV (252 aa). ATP is bound by residues 36–44 and Lys59; that span reads LGEGSYGSV. The active-site Proton acceptor is Asp149. Thr183 carries the phosphothreonine; by autocatalysis modification. Ser265 bears the Phosphoserine mark. Residues 290-310 are a coiled coil; that stretch reads LRDLINEAMDVKLKRQESQQR. Over residues 303–312 the composition is skewed to basic and acidic residues; it reads KRQESQQREV. Residues 303-332 form a disordered region; that stretch reads KRQESQQREVDQDDEENSEEDEMDSGTMVR. The segment covering 313-326 has biased composition (acidic residues); that stretch reads DQDDEENSEEDEMD. Position 320 is a phosphoserine (Ser320). A phosphothreonine mark is found at Thr340 and Thr367. At Thr387 the chain carries Phosphothreonine; by PKB/AKT1. A phosphoserine mark is found at Ser410 and Ser414. The residue at position 433 (Tyr433) is a Phosphotyrosine. The SARAH domain maps to 433–480; it reads YEFLKSWTVEDLQKRLLALDPMMEQEIEEIRQKYQSKRQPILDAIEAK.

The protein belongs to the protein kinase superfamily. STE Ser/Thr protein kinase family. STE20 subfamily. Homodimer; mediated via the coiled-coil region. Interacts with NORE1, which inhibits autoactivation. Interacts with and stabilizes SAV1. Interacts with RASSF1. Interacts with FOXO3. Interacts with RASSF2 (via SARAH domain). Interacts with AR, PKB/AKT1, TNNI3 and SIRT1. Interacts with DLG5 (via PDZ domain 3). Interacts with MARK3 and SCRIB in the presence of DLG5. Requires Mg(2+) as cofactor. In terms of processing, autophosphorylated on serine and threonine residues. Phosphorylation at Thr-387 by PKB/AKT1, leads to inhibition of its: kinase activity, nuclear translocation and autophosphorylation at Thr-183. It also diminishes its cleavage by caspases and its ability to phosphorylate FOXO3. Proteolytically cleaved by caspase-3 during apoptosis at Asp-326 and Asp-349 resulting in a 37 kDa or a 39 kDa subunit respectively. The 39 kDa subunit is further cleaved into the 37 kDa form. Proteolytic cleavage results in kinase activation and nuclear translocation of the truncated form (MST1/N). It is less likely that cleavage at Asp-349 is a prerequisite for activation as this site is not conserved in the murine ortholog.

It is found in the cytoplasm. The protein resides in the nucleus. The enzyme catalyses L-seryl-[protein] + ATP = O-phospho-L-seryl-[protein] + ADP + H(+). It catalyses the reaction L-threonyl-[protein] + ATP = O-phospho-L-threonyl-[protein] + ADP + H(+). Its activity is regulated as follows. Inhibited by the C-terminal non-catalytic region. Activated by caspase-cleavage. Full activation also requires homodimerization and autophosphorylation of Thr-183. Activated by RASSF1 which acts by preventing its dephosphorylation. In terms of biological role, stress-activated, pro-apoptotic kinase which, following caspase-cleavage, enters the nucleus and induces chromatin condensation followed by internucleosomal DNA fragmentation. Key component of the Hippo signaling pathway which plays a pivotal role in organ size control and tumor suppression by restricting proliferation and promoting apoptosis. The core of this pathway is composed of a kinase cascade wherein STK3/MST2 and STK4/MST1, in complex with its regulatory protein SAV1, phosphorylates and activates LATS1/2 in complex with its regulatory protein MOB1, which in turn phosphorylates and inactivates YAP1 oncoprotein and WWTR1/TAZ. Phosphorylation of YAP1 by LATS2 inhibits its translocation into the nucleus to regulate cellular genes important for cell proliferation, cell death, and cell migration. STK3/MST2 and STK4/MST1 are required to repress proliferation of mature hepatocytes, to prevent activation of facultative adult liver stem cells (oval cells), and to inhibit tumor formation. Phosphorylates 'Ser-14' of histone H2B (H2BS14ph) during apoptosis. Phosphorylates FOXO3 upon oxidative stress, which results in its nuclear translocation and cell death initiation. Phosphorylates MOBKL1A, MOBKL1B and RASSF2. Phosphorylates TNNI3 (cardiac Tn-I) and alters its binding affinity to TNNC1 (cardiac Tn-C) and TNNT2 (cardiac Tn-T). Phosphorylates FOXO1 on 'Ser-212' and regulates its activation and stimulates transcription of PMAIP1 in a FOXO1-dependent manner. Phosphorylates SIRT1 and inhibits SIRT1-mediated p53/TP53 deacetylation, thereby promoting p53/TP53 dependent transcription and apoptosis upon DNA damage. Acts as an inhibitor of PKB/AKT1. Phosphorylates AR on 'Ser-650' and suppresses its activity by intersecting with PKB/AKT1 signaling and antagonizing formation of AR-chromatin complexes. The sequence is that of Serine/threonine-protein kinase 4 (STK4) from Macaca mulatta (Rhesus macaque).